Reading from the N-terminus, the 70-residue chain is U-scoloptoxin(04)-Er3a (70 aa).

The first 24 residues, M1–A24, serve as a signal peptide directing secretion.

The protein belongs to the scoloptoxin-04 family. Contains 2 disulfide bonds. As to expression, expressed by the venom gland.

The protein localises to the secreted. The sequence is that of U-scoloptoxin(04)-Er3a from Ethmostigmus rubripes (Giant centipede).